Here is a 253-residue protein sequence, read N- to C-terminus: MICOS complex subunit mic25 (253 aa).

The segment at 1–89 is disordered; it reads MGGSESTGRK…GAHKPTAAGV (89 aa). Residue Gly-2 is the site of N-myristoyl glycine attachment. The span at 28 to 44 shows a compositional bias: basic and acidic residues; that stretch reads RLSDEVVNRMKDSDLPS. Low complexity predominate over residues 48–64; that stretch reads STSAASGTASAPAAFPS. Positions 94–178 form a coiled coil; the sequence is AEEDLYRRYE…EQLSSIEKKN (85 aa). Residues 206 to 248 enclose the CHCH domain; it reads DPVCMNLQADILKCYSENKQERLNCSNLAKEYRKCVSAAQKNL. 2 consecutive short sequence motifs (cx9C motif) follow at residues 209 to 219 and 230 to 240; these read CMNLQADILKC and CSNLAKEYRKC. Cystine bridges form between Cys-209/Cys-240 and Cys-219/Cys-230.

The protein belongs to the MICOS complex subunit Mic19 family. Metazoan Mic25 subfamily. In terms of assembly, component of the mitochondrial contact site and cristae organizing system (MICOS) complex (also known as MINOS or MitOS complex).

It is found in the mitochondrion inner membrane. Component of the MICOS complex, a large protein complex of the mitochondrial inner membrane that plays crucial roles in the maintenance of crista junctions, inner membrane architecture, and formation of contact sites to the outer membrane. The sequence is that of MICOS complex subunit mic25 (chchd6) from Xenopus tropicalis (Western clawed frog).